The primary structure comprises 622 residues: Coiled-coil domain-containing protein 17 (622 aa).

Coiled coils occupy residues Arg-81–Arg-102, Ala-146–Leu-207, and Gly-294–Ala-320. Disordered stretches follow at residues Ser-334–Pro-356 and Pro-584–Phe-622. The segment covering Pro-344–Pro-356 has biased composition (pro residues). The span at Pro-593–Ser-615 shows a compositional bias: basic and acidic residues.

In Homo sapiens (Human), this protein is Coiled-coil domain-containing protein 17 (CCDC17).